The primary structure comprises 699 residues: Autophagy-related protein 9 (699 aa).

The Cytoplasmic segment spans residues methionine 1–aspartate 98. Residues leucine 99–valine 119 traverse the membrane as a helical segment. The Lumenal segment spans residues aspartate 120–asparagine 139. Asparagine 139 carries N-linked (GlcNAc...) asparagine glycosylation. The helical transmembrane segment at phenylalanine 140–leucine 160 threads the bilayer. Topologically, residues serine 161–arginine 299 are cytoplasmic. The stretch at phenylalanine 300–isoleucine 320 is an intramembrane region. The Cytoplasmic segment spans residues asparagine 321–threonine 385. The chain crosses the membrane as a helical span at residues isoleucine 386 to isoleucine 406. The Lumenal segment spans residues valine 407–arginine 420. A helical transmembrane segment spans residues threonine 421–valine 441. The Cytoplasmic portion of the chain corresponds to aspartate 442–arginine 487. An intramembrane segment occupies isoleucine 488 to serine 508. Residues leucine 509–isoleucine 699 lie on the Cytoplasmic side of the membrane. Residues isoleucine 599 to histidine 618 are compositionally biased toward low complexity. Positions isoleucine 599–glutamine 620 are disordered.

It belongs to the ATG9 family. Homotrimer; forms a homotrimer with a central pore that forms a path between the two membrane leaflets.

The protein resides in the preautophagosomal structure membrane. Its subcellular location is the cytoplasmic vesicle membrane. It carries out the reaction a 1,2-diacyl-sn-glycero-3-phosphocholine(in) = a 1,2-diacyl-sn-glycero-3-phosphocholine(out). The enzyme catalyses a 1,2-diacyl-sn-glycero-3-phospho-L-serine(in) = a 1,2-diacyl-sn-glycero-3-phospho-L-serine(out). The catalysed reaction is a 1,2-diacyl-sn-glycero-3-phosphoethanolamine(in) = a 1,2-diacyl-sn-glycero-3-phosphoethanolamine(out). Its function is as follows. Phospholipid scramblase involved in autophagy by mediating autophagosomal membrane expansion. Cycles between the preautophagosomal structure/phagophore assembly site (PAS) and the cytoplasmic vesicle pool and supplies membrane for the growing autophagosome. Lipid scramblase activity plays a key role in preautophagosomal structure/phagophore assembly by distributing the phospholipids that arrive through ATG2 from the cytoplasmic to the luminal leaflet of the bilayer, thereby driving autophagosomal membrane expansion. Required for lipopolysaccharide (LPS)-enhanced bacterial clearance through the autophagic pathway. The protein is Autophagy-related protein 9 (atg9) of Dictyostelium discoideum (Social amoeba).